A 369-amino-acid polypeptide reads, in one-letter code: MKSGRFIGVMSGTSLDGVDVVLATIDEHRVAQLASLSWPIPVSLKQAVLDICQGQQLTLSQFGQLDTQLGQLFADAVNALLKEQNLQARDIVAIGCHGQTVWHEPTGVAPHTLQIGDNNQIVARTGITVVGDFRRRDIALGGQGAPLVPAFHHALLAHPTERRMVLNIGGIANLSLLIPGQPVGGYDTGPGNMLMDAWIWRQAGKPYDKDAEWARAGKVILPLLQNMLSDPYFSQPAPKSTGREYFNYGWLERHLRHFPGVDPRDVQATLAELTAVTISEQVLLSGGCERLMVCGGGSRNPLLMARLAALLPGTEVTTTDAVGISGDDMEALAFAWLAWRTLAGLPGNLPSVTGASQETVLGAIFPANP.

12–19 (GTSLDGVD) is an ATP binding site.

Belongs to the anhydro-N-acetylmuramic acid kinase family.

The enzyme catalyses 1,6-anhydro-N-acetyl-beta-muramate + ATP + H2O = N-acetyl-D-muramate 6-phosphate + ADP + H(+). The protein operates within amino-sugar metabolism; 1,6-anhydro-N-acetylmuramate degradation. It participates in cell wall biogenesis; peptidoglycan recycling. Functionally, catalyzes the specific phosphorylation of 1,6-anhydro-N-acetylmuramic acid (anhMurNAc) with the simultaneous cleavage of the 1,6-anhydro ring, generating MurNAc-6-P. Is required for the utilization of anhMurNAc either imported from the medium or derived from its own cell wall murein, and thus plays a role in cell wall recycling. The polypeptide is Anhydro-N-acetylmuramic acid kinase (Escherichia coli (strain K12 / MC4100 / BW2952)).